The primary structure comprises 352 residues: MKLSQFKFKLPEEKIALHPTKYRDESRLMVLHKRTGEIEHKMFKDILNYFDDKDVFVFNDTKVFPARLYGNKEKTGARIEVFLLRELNEELRLWDVLVDPARKIRIGNKLYFGDDDSMVAEVIDNTTSRGRTLRFLYDGPHDEFKKALYALGETPLPHTILNRPVEEEDAERFQSIFAKNEGAVTAPTASLHFSRELMKRMEIKGIDFAYITLHAGLGNFRDIDVEDLTKHKMDSEQMFVTEEAVKIVNRAKDLGKNVCAVGTTVMRAIESTVSTDGHLKEYEGWTNKFIFPPYDFTVANAMVSNFHMPLSTLLMIVAAFGGYDQVMDAYHIALKEGYRFGTYGDAMLILDK.

This sequence belongs to the QueA family. In terms of assembly, monomer.

The protein localises to the cytoplasm. It catalyses the reaction 7-aminomethyl-7-carbaguanosine(34) in tRNA + S-adenosyl-L-methionine = epoxyqueuosine(34) in tRNA + adenine + L-methionine + 2 H(+). It participates in tRNA modification; tRNA-queuosine biosynthesis. Functionally, transfers and isomerizes the ribose moiety from AdoMet to the 7-aminomethyl group of 7-deazaguanine (preQ1-tRNA) to give epoxyqueuosine (oQ-tRNA). The sequence is that of S-adenosylmethionine:tRNA ribosyltransferase-isomerase from Bacteroides fragilis (strain ATCC 25285 / DSM 2151 / CCUG 4856 / JCM 11019 / LMG 10263 / NCTC 9343 / Onslow / VPI 2553 / EN-2).